The chain runs to 332 residues: UPF0194 membrane protein YbhG (332 aa).

An N-terminal signal peptide occupies residues 1–16; the sequence is MMKKPVVIGLAVVVLA. Residues 108–209 are a coiled coil; sequence EEIAQAAAAV…LNLQDSTLIA (102 aa).

This sequence belongs to the UPF0194 family.

It is found in the periplasm. In Escherichia coli O45:K1 (strain S88 / ExPEC), this protein is UPF0194 membrane protein YbhG.